The following is a 501-amino-acid chain: Raftlin-2 (501 aa).

Disordered stretches follow at residues 1 to 20 (MGCG…GKIF) and 196 to 238 (SWNE…SRKG). G2 carries N-myristoyl glycine lipidation. The S-palmitoyl cysteine moiety is linked to residue C3. The span at 224-233 (MEQNGSPSSS) shows a compositional bias: polar residues. S405 carries the post-translational modification Phosphoserine. Residues 407-454 (AQTTDKKASRRIKGEDKNKATSRSIGLDTTTPQPAESRHPPEECRLSP) are disordered. At T409 the chain carries Phosphothreonine. A compositionally biased stretch (basic and acidic residues) spans 410-425 (TDKKASRRIKGEDKNK). Polar residues predominate over residues 427 to 440 (TSRSIGLDTTTPQP). S430 is modified (phosphoserine). Basic and acidic residues predominate over residues 442 to 451 (ESRHPPEECR).

This sequence belongs to the raftlin family.

It localises to the cell membrane. Its function is as follows. Upon bacterial lipopolysaccharide stimulation, mediates clathrin-dependent internalization of TLR4 in dendritic cells, resulting in activation of TICAM1-mediated signaling and subsequent IFNB1 production. May regulate B-cell antigen receptor mediated-signaling. The chain is Raftlin-2 (RFTN2) from Pongo abelii (Sumatran orangutan).